Reading from the N-terminus, the 133-residue chain is ATP synthase epsilon chain, chloroplastic (133 aa).

It belongs to the ATPase epsilon chain family. F-type ATPases have 2 components, CF(1) - the catalytic core - and CF(0) - the membrane proton channel. CF(1) has five subunits: alpha(3), beta(3), gamma(1), delta(1), epsilon(1). CF(0) has three main subunits: a, b and c.

The protein localises to the plastid. The protein resides in the chloroplast thylakoid membrane. In terms of biological role, produces ATP from ADP in the presence of a proton gradient across the membrane. The protein is ATP synthase epsilon chain, chloroplastic of Chara vulgaris (Common stonewort).